Here is a 288-residue protein sequence, read N- to C-terminus: Energy-coupling factor transporter ATP-binding protein EcfA2 (288 aa).

The region spanning 3–245 (IEFKNVDYIY…PDWLKKHFLD (243 aa)) is the ABC transporter domain. 40-47 (GHTGSGKS) is an ATP binding site.

It belongs to the ABC transporter superfamily. Energy-coupling factor EcfA family. In terms of assembly, forms a stable energy-coupling factor (ECF) transporter complex composed of 2 membrane-embedded substrate-binding proteins (S component), 2 ATP-binding proteins (A component) and 2 transmembrane proteins (T component).

The protein resides in the cell membrane. Functionally, ATP-binding (A) component of a common energy-coupling factor (ECF) ABC-transporter complex. Unlike classic ABC transporters this ECF transporter provides the energy necessary to transport a number of different substrates. This Lactobacillus gasseri (strain ATCC 33323 / DSM 20243 / BCRC 14619 / CIP 102991 / JCM 1131 / KCTC 3163 / NCIMB 11718 / NCTC 13722 / AM63) protein is Energy-coupling factor transporter ATP-binding protein EcfA2.